The following is a 261-amino-acid chain: Glucose 1-dehydrogenase (261 aa).

11–35 is an NADP(+) binding site; the sequence is VITGSSTGLGKSMAIRFATEKAKVV. Ser-145 serves as a coordination point for substrate. The active-site Proton acceptor is the Tyr-158.

This sequence belongs to the short-chain dehydrogenases/reductases (SDR) family. In terms of assembly, homotetramer.

The catalysed reaction is D-glucose + NAD(+) = D-glucono-1,5-lactone + NADH + H(+). It carries out the reaction D-glucose + NADP(+) = D-glucono-1,5-lactone + NADPH + H(+). The polypeptide is Glucose 1-dehydrogenase (Priestia megaterium (Bacillus megaterium)).